Here is a 90-residue protein sequence, read N- to C-terminus: DNA-directed RNA polymerase subunit omega (90 aa).

The protein belongs to the RNA polymerase subunit omega family. In terms of assembly, the RNAP catalytic core consists of 2 alpha, 1 beta, 1 beta' and 1 omega subunit. When a sigma factor is associated with the core the holoenzyme is formed, which can initiate transcription.

It catalyses the reaction RNA(n) + a ribonucleoside 5'-triphosphate = RNA(n+1) + diphosphate. In terms of biological role, promotes RNA polymerase assembly. Latches the N- and C-terminal regions of the beta' subunit thereby facilitating its interaction with the beta and alpha subunits. This Rhodopirellula baltica (strain DSM 10527 / NCIMB 13988 / SH1) protein is DNA-directed RNA polymerase subunit omega.